The sequence spans 776 residues: Kinesin-like protein KIN-8A (776 aa).

Disordered stretches follow at residues 1-31 (MPVS…RGGA) and 80-135 (VGEV…KSSH). Residues 7-26 (ASAAGGQPWSSAAPAPASAP) show a composition bias toward low complexity. Pro residues predominate over residues 123–132 (PPPPPAPPPK). The region spanning 205 to 534 (RIMVFVRLRP…LHWADRAKEI (330 aa)) is the Kinesin motor domain. ATP is bound at residue 297–304 (GATGAGKT). A coiled-coil region spans residues 554–592 (TDQAKLVLELQKENSELRQQLARQQQKLLTVQAQTLASN). The segment at 590 to 611 (ASNASPQQSPAPSAQISTPCST) is disordered. The span at 593 to 604 (ASPQQSPAPSAQ) shows a compositional bias: low complexity. A coiled-coil region spans residues 634–671 (AAENAQVRDLQRKVKAMEAEIEKMKKEHLLQLKQKDEF).

Belongs to the TRAFAC class myosin-kinesin ATPase superfamily. Kinesin family. KIN-8 subfamily.

The sequence is that of Kinesin-like protein KIN-8A from Oryza sativa subsp. japonica (Rice).